The primary structure comprises 298 residues: UTP--glucose-1-phosphate uridylyltransferase (298 aa).

Belongs to the UDPGP type 2 family.

It catalyses the reaction alpha-D-glucose 1-phosphate + UTP + H(+) = UDP-alpha-D-glucose + diphosphate. It functions in the pathway carbohydrate metabolism; nucleotide-sugar metabolism. It participates in capsule biogenesis; capsule polysaccharide biosynthesis. The sequence is that of UTP--glucose-1-phosphate uridylyltransferase (galF) from Klebsiella pneumoniae.